The sequence spans 365 residues: Aminomethyltransferase (365 aa).

It belongs to the GcvT family. As to quaternary structure, the glycine cleavage system is composed of four proteins: P, T, L and H.

It catalyses the reaction N(6)-[(R)-S(8)-aminomethyldihydrolipoyl]-L-lysyl-[protein] + (6S)-5,6,7,8-tetrahydrofolate = N(6)-[(R)-dihydrolipoyl]-L-lysyl-[protein] + (6R)-5,10-methylene-5,6,7,8-tetrahydrofolate + NH4(+). Functionally, the glycine cleavage system catalyzes the degradation of glycine. The sequence is that of Aminomethyltransferase from Natranaerobius thermophilus (strain ATCC BAA-1301 / DSM 18059 / JW/NM-WN-LF).